The following is an 86-amino-acid chain: Large ribosomal subunit protein bL27 (86 aa).

Positions 1 to 20 (MAHKKAGGSSRNGRDSESKR) are disordered.

It belongs to the bacterial ribosomal protein bL27 family.

The protein is Large ribosomal subunit protein bL27 of Paraburkholderia phymatum (strain DSM 17167 / CIP 108236 / LMG 21445 / STM815) (Burkholderia phymatum).